The following is a 328-amino-acid chain: Naphthalene 1,2-dioxygenase/salicylate 5-hydroxylase systems, ferredoxin--NAD(P)(+), reductase component (328 aa).

Residues 1–89 (MELVVEPLNL…DCTIEIPESD (89 aa)) form the 2Fe-2S ferredoxin-type domain. Positions 35, 40, 43, and 73 each coordinate [2Fe-2S] cluster. An FAD-binding FR-type domain is found at 96-193 (ARIVKGTVTA…SGPLGTAYLR (98 aa)).

It belongs to the bacterial ring-hydroxylating dioxygenase ferredoxin reductase family. As to quaternary structure, ferredoxin reductase NagAa belongs to both the salicylate 5-hydroxylase (S5H) and the naphthalene 1,2-dioxygenase (NDO) multicomponent enzyme systems. The NDO multicomponent enzyme system is composed of an electron transfer component and a dioxygenase component (iron sulfur protein (ISP)). The electron transfer component is composed of a ferredoxin reductase (NagAa) and a ferredoxin (NagAb), and the dioxygenase component is formed by a large alpha subunit (NagAc) and a small beta subunit (NagAd). The S5H multicomponent enzyme system is composed of an electron transfer component and a monooxygenase component. The electron transfer component is comprised of a ferredoxin reductase (NagAa) and a ferredoxin (NagAb), and the monooxygenase component is formed by a large subunit (NagG) and a small subunit (NagH). It depends on [2Fe-2S] cluster as a cofactor. FAD is required as a cofactor.

It catalyses the reaction 2 reduced [2Fe-2S]-[ferredoxin] + NAD(+) + H(+) = 2 oxidized [2Fe-2S]-[ferredoxin] + NADH. The catalysed reaction is 2 reduced [2Fe-2S]-[ferredoxin] + NADP(+) + H(+) = 2 oxidized [2Fe-2S]-[ferredoxin] + NADPH. It functions in the pathway aromatic compound metabolism; naphthalene degradation. Functionally, component of two multicomponent enzyme systems which are involved in the catabolism of naphthalene. Plays a role as an electron transfer component for both salicylate 5-hydroxylase (S5H) and naphthalene 1,2-dioxygenase (NDO) systems, by transferring electrons from NAD(P)H to the oxygenase component via the ferredoxin NagAb. The electron transport chain from the two systems can use both NADH and NADPH as electron donors at approximately similar rates. The sequence is that of Naphthalene 1,2-dioxygenase/salicylate 5-hydroxylase systems, ferredoxin--NAD(P)(+), reductase component from Ralstonia sp.